Consider the following 319-residue polypeptide: ATP-dependent 6-phosphofructokinase (319 aa).

G11 is an ATP binding site. 21–25 (RAVVR) is an ADP binding site. Residues 72 to 73 (RC) and 102 to 105 (GDGS) contribute to the ATP site. D103 serves as a coordination point for Mg(2+). 125-127 (TID) is a substrate binding site. D127 (proton acceptor) is an active-site residue. R154 is an ADP binding site. Residues R162 and 169–171 (MGR) each bind substrate. Residues 185–187 (GAE), R211, and 213–215 (KLH) contribute to the ADP site. Residues E222, R243, and 249–252 (HLQR) contribute to the substrate site.

Belongs to the phosphofructokinase type A (PFKA) family. ATP-dependent PFK group I subfamily. Prokaryotic clade 'B1' sub-subfamily. As to quaternary structure, homotetramer. Requires Mg(2+) as cofactor.

Its subcellular location is the cytoplasm. The catalysed reaction is beta-D-fructose 6-phosphate + ATP = beta-D-fructose 1,6-bisphosphate + ADP + H(+). Its pathway is carbohydrate degradation; glycolysis; D-glyceraldehyde 3-phosphate and glycerone phosphate from D-glucose: step 3/4. With respect to regulation, allosterically activated by ADP and other diphosphonucleosides, and allosterically inhibited by phosphoenolpyruvate. Functionally, catalyzes the phosphorylation of D-fructose 6-phosphate to fructose 1,6-bisphosphate by ATP, the first committing step of glycolysis. This Clostridium novyi (strain NT) protein is ATP-dependent 6-phosphofructokinase.